A 445-amino-acid chain; its full sequence is Probable D-serine dehydratase (445 aa).

Residue Lys-111 is modified to N6-(pyridoxal phosphate)lysine.

This sequence belongs to the serine/threonine dehydratase family. DsdA subfamily. It depends on pyridoxal 5'-phosphate as a cofactor.

The catalysed reaction is D-serine = pyruvate + NH4(+). This is Probable D-serine dehydratase from Burkholderia pseudomallei (strain 1106a).